Here is a 543-residue protein sequence, read N- to C-terminus: Phenylalanine--tRNA ligase beta subunit (543 aa).

One can recognise a B5 domain in the interval 269-344; sequence FDFRIMRPAR…KSKGIENIEE (76 aa). The Mg(2+) site is built by aspartate 322, aspartate 328, glutamate 331, and aspartate 332.

Belongs to the phenylalanyl-tRNA synthetase beta subunit family. Type 2 subfamily. As to quaternary structure, tetramer of two alpha and two beta subunits. The cofactor is Mg(2+).

It is found in the cytoplasm. It catalyses the reaction tRNA(Phe) + L-phenylalanine + ATP = L-phenylalanyl-tRNA(Phe) + AMP + diphosphate + H(+). The sequence is that of Phenylalanine--tRNA ligase beta subunit from Thermoplasma acidophilum (strain ATCC 25905 / DSM 1728 / JCM 9062 / NBRC 15155 / AMRC-C165).